The primary structure comprises 498 residues: ATP synthase subunit beta, chloroplastic (498 aa).

172 to 179 (GGAGVGKT) contributes to the ATP binding site.

This sequence belongs to the ATPase alpha/beta chains family. In terms of assembly, F-type ATPases have 2 components, CF(1) - the catalytic core - and CF(0) - the membrane proton channel. CF(1) has five subunits: alpha(3), beta(3), gamma(1), delta(1), epsilon(1). CF(0) has four main subunits: a(1), b(1), b'(1) and c(9-12).

Its subcellular location is the plastid. It is found in the chloroplast thylakoid membrane. It catalyses the reaction ATP + H2O + 4 H(+)(in) = ADP + phosphate + 5 H(+)(out). Produces ATP from ADP in the presence of a proton gradient across the membrane. The catalytic sites are hosted primarily by the beta subunits. This chain is ATP synthase subunit beta, chloroplastic, found in Lactuca sativa (Garden lettuce).